Consider the following 207-residue polypeptide: V-type ATP synthase subunit D (207 aa).

The protein belongs to the V-ATPase D subunit family.

In terms of biological role, produces ATP from ADP in the presence of a proton gradient across the membrane. The protein is V-type ATP synthase subunit D of Streptococcus gordonii (strain Challis / ATCC 35105 / BCRC 15272 / CH1 / DL1 / V288).